The following is a 286-amino-acid chain: Pantothenate synthetase (286 aa).

30–37 (MGCFHQGH) contributes to the ATP binding site. His37 functions as the Proton donor in the catalytic mechanism. Residue Gln61 coordinates (R)-pantoate. Beta-alanine is bound at residue Gln61. 147–150 (GEKD) is a binding site for ATP. Gln153 lines the (R)-pantoate pocket. 184 to 187 (MSSR) provides a ligand contact to ATP.

It belongs to the pantothenate synthetase family. Homodimer.

Its subcellular location is the cytoplasm. It carries out the reaction (R)-pantoate + beta-alanine + ATP = (R)-pantothenate + AMP + diphosphate + H(+). It participates in cofactor biosynthesis; (R)-pantothenate biosynthesis; (R)-pantothenate from (R)-pantoate and beta-alanine: step 1/1. Functionally, catalyzes the condensation of pantoate with beta-alanine in an ATP-dependent reaction via a pantoyl-adenylate intermediate. The protein is Pantothenate synthetase of Desulfotalea psychrophila (strain LSv54 / DSM 12343).